We begin with the raw amino-acid sequence, 488 residues long: MADVRKLKNYINGEWVESKADKYEDVINPATGEVLCQVPISTRAELDQAAVIAEQAFEKWSQVAVPRRARVLFSFQQLLIQHKEELARLITLENGKNLSEARGEVQRGIENVEFAAGAPTLMMGDSLASIATDVEAANYRYPVGVVGGIAPFNFPMMVPCWMFPMAIALGNSFILKPSERTPLLMEKLVELFSEAGLPKGVFNVVYGAHDVVNGILENETIKAVSFVGSKPVGEYVYKTGSANLKRVQALTGAKNHTIVLNDADLEDTVTNVISAAFGSAGERCMACAVVTVEEGIADDFLAALRTAAQNVKIGNGLDDGVFLGPVIREENQKRTIAYIEKGVEEGAKLTVDGRETGLSEGYFVGPTILEDVTTDMTIWKDEIFAPVLSVIRVKNLQEAVRVANQSEFANGACIFTNNAKAIRYFREKIDAGMLGVNLGVPAPMAFFPFSGWKSSFYGTLHANGKDSVDFYTHKKVVTARYSLKGYEE.

Residues Ala150, Phe152, Lys176, Glu179, Arg180, Ser229, and Thr251 each contribute to the NAD(+) site. Cys284 serves as the catalytic Nucleophile. Position 382 (Glu382) interacts with NAD(+).

This sequence belongs to the aldehyde dehydrogenase family. IolA subfamily. Homotetramer.

It carries out the reaction 3-oxopropanoate + NAD(+) + CoA + H2O = hydrogencarbonate + acetyl-CoA + NADH + H(+). The enzyme catalyses 2-methyl-3-oxopropanoate + NAD(+) + CoA + H2O = propanoyl-CoA + hydrogencarbonate + NADH + H(+). The protein operates within polyol metabolism; myo-inositol degradation into acetyl-CoA; acetyl-CoA from myo-inositol: step 7/7. Functionally, catalyzes the oxidation of malonate semialdehyde (MSA) and methylmalonate semialdehyde (MMSA) into acetyl-CoA and propanoyl-CoA, respectively. Is involved in a myo-inositol catabolic pathway. Bicarbonate, and not CO2, is the end-product of the enzymatic reaction. This chain is Malonate-semialdehyde dehydrogenase, found in Listeria innocua serovar 6a (strain ATCC BAA-680 / CLIP 11262).